An 88-amino-acid chain; its full sequence is Transmembrane protein 069R (88 aa).

A run of 2 helical transmembrane segments spans residues 30-50 (ALWP…VFTA) and 67-87 (VGVF…GDSF).

It localises to the host membrane. The polypeptide is Transmembrane protein 069R (Frog virus 3 (isolate Goorha) (FV-3)).